Here is a 931-residue protein sequence, read N- to C-terminus: Beta-mannosidase A (931 aa).

An N-terminal signal peptide occupies residues 1 to 21; the sequence is MRHSIGLAAALLAPTLPVALG. Residues Asn-40, Asn-79, Asn-247, Asn-282, Asn-316, Asn-326, and Asn-347 are each glycosylated (N-linked (GlcNAc...) asparagine). The active-site Proton donor is Glu-479. N-linked (GlcNAc...) asparagine glycans are attached at residues Asn-550, Asn-608, Asn-658, Asn-738, Asn-790, Asn-798, Asn-830, and Asn-918.

Belongs to the glycosyl hydrolase 2 family. Beta-mannosidase A subfamily. Homodimer.

It is found in the secreted. The catalysed reaction is Hydrolysis of terminal, non-reducing beta-D-mannose residues in beta-D-mannosides.. The protein operates within glycan metabolism; N-glycan degradation. In terms of biological role, exoglycosidase that cleaves the single beta-linked mannose residue from the non-reducing end of beta-mannosidic oligosaccharides of various complexity and length. Involved in the degradation of polymeric mannan and galactomannan. This is Beta-mannosidase A (mndA) from Aspergillus niger (strain ATCC MYA-4892 / CBS 513.88 / FGSC A1513).